A 178-amino-acid chain; its full sequence is MPAPGVHHPNTASPFLKTVAAGKGQVAAAPEHPAPSARARGSHLRPRRCSCSSWLDKECVYFCHLDIIWVNTPGQTAPYGLGNPPRRRRRSLPKRCECSSGGDPACATFCHRRPWAEAVVVPGSRSPADVFQAGRTWTSAGELLRQLRNISAAKIRFPRRPQEAGRQLRPTHPRRRKR.

The signal sequence occupies residues 1-24 (MPAPGVHHPNTASPFLKTVAAGKG). A propeptide spanning residues 25–46 (QVAAAPEHPAPSARARGSHLRP) is cleaved from the precursor. Disulfide bonds link Cys-49–Cys-63 and Cys-51–Cys-59. The propeptide occupies 70–178 (VNTPGQTAPY…RPTHPRRRKR (109 aa)). The segment at 96 to 111 (CECSSGGDPACATFCH) is endothelin-like. The disordered stretch occupies residues 156–178 (RFPRRPQEAGRQLRPTHPRRRKR). The span at 169–178 (RPTHPRRRKR) shows a compositional bias: basic residues.

It belongs to the endothelin/sarafotoxin family.

It localises to the secreted. Functionally, endothelins are endothelium-derived vasoconstrictor peptides. The sequence is that of Endothelin-2 (EDN2) from Canis lupus familiaris (Dog).